A 723-amino-acid polypeptide reads, in one-letter code: Fatty acid oxidation complex subunit alpha (723 aa).

Residues 1–189 (MIYQAETLQV…KIGLLDAVVD (189 aa)) form an enoyl-CoA hydratase/isomerase region. Residue aspartate 296 coordinates substrate. Residues 311–723 (NKETQRAAVL…FYGAQQQGSI (413 aa)) are 3-hydroxyacyl-CoA dehydrogenase. Residues methionine 325, aspartate 344, 401-403 (VVE), lysine 408, and serine 430 contribute to the NAD(+) site. Residue histidine 451 is the For 3-hydroxyacyl-CoA dehydrogenase activity of the active site. Asparagine 454 contributes to the NAD(+) binding site. The substrate site is built by asparagine 501 and tyrosine 661.

In the N-terminal section; belongs to the enoyl-CoA hydratase/isomerase family. This sequence in the C-terminal section; belongs to the 3-hydroxyacyl-CoA dehydrogenase family. Heterotetramer of two alpha chains (FadB) and two beta chains (FadA).

The catalysed reaction is a (3S)-3-hydroxyacyl-CoA + NAD(+) = a 3-oxoacyl-CoA + NADH + H(+). It catalyses the reaction a (3S)-3-hydroxyacyl-CoA = a (2E)-enoyl-CoA + H2O. It carries out the reaction a 4-saturated-(3S)-3-hydroxyacyl-CoA = a (3E)-enoyl-CoA + H2O. The enzyme catalyses (3S)-3-hydroxybutanoyl-CoA = (3R)-3-hydroxybutanoyl-CoA. The catalysed reaction is a (3Z)-enoyl-CoA = a 4-saturated (2E)-enoyl-CoA. It catalyses the reaction a (3E)-enoyl-CoA = a 4-saturated (2E)-enoyl-CoA. Its pathway is lipid metabolism; fatty acid beta-oxidation. Its function is as follows. Involved in the aerobic and anaerobic degradation of long-chain fatty acids via beta-oxidation cycle. Catalyzes the formation of 3-oxoacyl-CoA from enoyl-CoA via L-3-hydroxyacyl-CoA. It can also use D-3-hydroxyacyl-CoA and cis-3-enoyl-CoA as substrate. The chain is Fatty acid oxidation complex subunit alpha from Vibrio vulnificus (strain CMCP6).